The primary structure comprises 68 residues: Pleurocidin (68 aa).

A signal peptide spans 1–22 (MKFTATFLMIAIFVLMVEPGEC). Residues 48–68 (GDKQELNKRAVDEDPNVIVFE) constitute a propeptide that is removed on maturation.

Belongs to the pleurocidin family. Goblet cells.

The protein localises to the secreted. Antimicrobial peptide with potent activity against Gram-positive and Gram-negative bacteria. Activity against E.coli and B.subtilis. Weaker activity against L.mucor, s.marcescens and P.aeruginosa. May play a role in innate host defense. The sequence is that of Pleurocidin (ple2) from Pseudopleuronectes americanus (Winter flounder).